Here is a 3391-residue protein sequence, read N- to C-terminus: Genome polyprotein (3391 aa).

The segment at 1–15 (MNNQRKKTARPSFNM) is interaction with host EXOC1. Residues 1–101 (MNNQRKKTAR…LNIMNRRKRS (101 aa)) lie on the Cytoplasmic side of the membrane. The interval 37–72 (LLSGQGPMKLVMAFIAFLRFLAIPPTAGILARWGSF) is hydrophobic; homodimerization of capsid protein C. A propeptide spans 101 to 114 (SVTMLLMLLPTALA) (ER anchor for the capsid protein C, removed in mature form by serine protease NS3). A helical membrane pass occupies residues 102–119 (VTMLLMLLPTALAFHLTT). The Extracellular portion of the chain corresponds to 120–242 (RGGEPHMIVS…QIQRVETWAL (123 aa)). N-linked (GlcNAc...) asparagine; by host glycosylation is present at Asn183. Residues 243–260 (RHPGFTVIALFLAHAIGT) form a helical membrane-spanning segment. A topological domain (cytoplasmic) is located at residue Ser261. A helical membrane pass occupies residues 262–280 (ITQKGIIFILLMLVTPSMA). Topologically, residues 281-725 (MRCVGIGSRD…HQVFGTAYGV (445 aa)) are extracellular. Intrachain disulfides connect Cys283-Cys310, Cys340-Cys401, Cys354-Cys385, and Cys372-Cys396. An N-linked (GlcNAc...) asparagine; by host glycan is attached at Asn347. The fusion peptide stretch occupies residues 378-391 (DRGWGNGCGLFGKG). Asn433 carries an N-linked (GlcNAc...) asparagine; by host glycan. Disulfide bonds link Cys465–Cys565 and Cys582–Cys613. The chain crosses the membrane as a helical span at residues 726–746 (LFSGVSWTMKIGIGILLTWLG). At 747–752 (LNSRST) the chain is on the cytoplasmic side. A helical transmembrane segment spans residues 753 to 773 (SLSMTCIAVGMVTLYLGVMVQ). The Extracellular segment spans residues 774 to 1198 (ADSGCVINWK…NASDRMGMGT (425 aa)). Intrachain disulfides connect Cys778-Cys789, Cys829-Cys917, Cys953-Cys997, Cys1054-Cys1103, Cys1065-Cys1087, and Cys1086-Cys1090. Residues Asn904 and Asn981 are each glycosylated (N-linked (GlcNAc...) asparagine; by host). N-linked (GlcNAc...) asparagine; by host glycosylation is present at Asn1189. A helical membrane pass occupies residues 1199 to 1219 (TYLALMATFKMRPMFAVGLLF). At 1220-1225 (RRLTSR) the chain is on the cytoplasmic side. A helical membrane pass occupies residues 1226–1244 (EVLLLTIGLSLVASVELPN). At 1245-1268 (SLEELGDGLAMGIMILKLLTDFQS) the chain is on the lumenal side. The chain crosses the membrane as a helical span at residues 1269–1289 (HQLWATLLSLTFVKTTFSLHY). Ala1290 is a topological domain (cytoplasmic). Residues 1291–1309 (WKTMAMVLSIVSLFPLCLS) traverse the membrane as a helical segment. Residues 1310 to 1314 (TTSQK) lie on the Lumenal side of the membrane. The helical transmembrane segment at 1315-1335 (TTWLPVLLGSLGCKPLTMFLI) threads the bilayer. Residues 1336–1345 (AENKIWGRKS) lie on the Cytoplasmic side of the membrane. A helical transmembrane segment spans residues 1346–1366 (WPLNEGIMAVGIVSILLSSLL). Topologically, residues 1367–1369 (KND) are lumenal. The chain crosses the membrane as a helical span at residues 1370-1390 (VPLAGPLIAGGMLIACYVISG). Over 1391-1446 (SSADLSLEKAAEVSWEEEAEHSGASHNILVEVQDDGTMKIKDEERDDTLTILLKAT) the chain is Cytoplasmic. The segment at 1397–1436 (LEKAAEVSWEEEAEHSGASHNILVEVQDDGTMKIKDEERD) is interacts with and activates NS3 protease. Residues 1447–1467 (LLAVSGVYPLSIPATLFVWYF) constitute an intramembrane region (helical). Residues 1468–2147 (WQKKKQRSGV…MEELPDTIET (680 aa)) are Cytoplasmic-facing. One can recognise a Peptidase S7 domain in the interval 1475–1652 (SGVLWDTPSP…KASQEGPLPE (178 aa)). Residues His1525, Asp1549, and Ser1609 each act as charge relay system; for serine protease NS3 activity in the active site. The 157-residue stretch at 1655 to 1811 (DEVFRKRNLT…QSNAVIQDEE (157 aa)) folds into the Helicase ATP-binding domain. The tract at residues 1659–1662 (RKRN) is important for RNA-binding. ATP is bound at residue 1668–1675 (LHPGSGKT). Positions 1759–1762 (DEAH) match the DEAH box motif. The Helicase C-terminal domain maps to 1821 to 1988 (SGYEWITDFP…IIPALFEPER (168 aa)). Lys1863 bears the N6-acetyllysine; by host mark. Residues 2148 to 2168 (LMLLALIAVLTGGVTLFFLSG) form a helical membrane-spanning segment. The Lumenal portion of the chain corresponds to 2169–2170 (KG). The helical intramembrane region spans 2171-2191 (LGKTSIGLLCVMASSVLLWMA). Position 2192 (Ser2192) is a topological domain, lumenal. A helical transmembrane segment spans residues 2193 to 2213 (VEPHWIAASIILEFFLMVLLI). Topologically, residues 2214–2228 (PEPDRQRTPQDNQLA) are cytoplasmic. A helical membrane pass occupies residues 2229-2249 (YVVIGLLFMILTVAANEMGLL). Residues 2250–2275 (ETTKKDLGIGHVAAENHHHATMLDVD) are Lumenal-facing. The segment at residues 2276–2296 (LRPASAWTLYAVATTVITPMM) is an intramembrane region (helical). At 2297-2348 (RHTIENTTANISLTAIANQAAILMGLDKGWPISKMDIGVPLLALGCYSQVNP) the chain is on the lumenal side. N-linked (GlcNAc...) asparagine; by host glycans are attached at residues Asn2302 and Asn2306. Residues 2349–2369 (LTLTAAVLMLVAHYAIIGPGL) form a helical membrane-spanning segment. At 2370–2414 (QAKATREAQKRTAAGIMKNPTVDGIVAIDLDPVVYDAKFEKQLGQ) the chain is on the cytoplasmic side. Residues 2415–2435 (IMLLILCTSQILLMRTTWALC) form a helical membrane-spanning segment. The Lumenal segment spans residues 2436 to 2460 (ESITLATGPLTTLWEGSPGKFWNTT). Residue Asn2458 is glycosylated (N-linked (GlcNAc...) asparagine; by host). Residues 2461 to 2481 (IAVSMANIFRGSYLAGAGLAF) form a helical membrane-spanning segment. The Cytoplasmic portion of the chain corresponds to 2482 to 3391 (SLMKSLGGGR…NESDPEGALW (910 aa)). In terms of domain architecture, mRNA cap 0-1 NS5-type MT spans 2494–2755 (TGAKGKHWER…DVDLGAGTRH (262 aa)). Residue Ser2548 coordinates S-adenosyl-L-methionine. Residue Ser2548 is modified to Phosphoserine. Lys2553 (for 2'-O-MTase activity) is an active-site residue. An SUMO-interacting motif motif is present at residues 2569-2572 (VIDL). The S-adenosyl-L-methionine site is built by Gly2578, Trp2579, Thr2596, Lys2597, Asp2623, and Val2624. Asp2638 (for 2'-O-MTase activity) is an active-site residue. Ile2639 is a binding site for S-adenosyl-L-methionine. Catalysis depends on for 2'-O-MTase activity residues Lys2672 and Glu2708. Tyr2710 contacts S-adenosyl-L-methionine. Positions 2929, 2933, 2938, and 2941 each coordinate Zn(2+). Residues 3019–3168 (GNMYADDTAG…KPIDDRFATA (150 aa)) enclose the RdRp catalytic domain. Residues His3203, Cys3219, and Cys3338 each coordinate Zn(2+).

In the N-terminal section; belongs to the class I-like SAM-binding methyltransferase superfamily. mRNA cap 0-1 NS5-type methyltransferase family. Homodimer. Interacts (via N-terminus) with host EXOC1 (via C-terminus); this interaction results in EXOC1 degradation through the proteasome degradation pathway. As to quaternary structure, forms heterodimers with envelope protein E in the endoplasmic reticulum and Golgi. In terms of assembly, homodimer; in the endoplasmic reticulum and Golgi. Interacts with protein prM. Interacts with non-structural protein 1. Homodimer; Homohexamer when secreted. Interacts with envelope protein E. As to quaternary structure, interacts (via N-terminus) with serine protease NS3. In terms of assembly, forms a heterodimer with serine protease NS3. May form homooligomers. Forms a heterodimer with NS2B. Interacts with NS4B. Interacts with unphosphorylated RNA-directed RNA polymerase NS5; this interaction stimulates RNA-directed RNA polymerase NS5 guanylyltransferase activity. Interacts with host SHFL. As to quaternary structure, interacts with host MAVS; this interaction inhibits the synthesis of IFN-beta. Interacts with host SHFL. Interacts with host AUP1; the interaction occurs in the presence of Dengue virus NS4B and induces lipophagy which facilitates production of virus progeny particles. In terms of assembly, interacts with serine protease NS3. Homodimer. Interacts with host STAT2; this interaction inhibits the phosphorylation of the latter, and, when all viral proteins are present (polyprotein), targets STAT2 for degradation. Interacts with serine protease NS3. In terms of processing, specific enzymatic cleavages in vivo yield mature proteins. Cleavages in the lumen of endoplasmic reticulum are performed by host signal peptidase, whereas cleavages in the cytoplasmic side are performed by serine protease NS3. Signal cleavage at the 2K-4B site requires a prior NS3 protease-mediated cleavage at the 4A-2K site. Post-translationally, cleaved in post-Golgi vesicles by a host furin, releasing the mature small envelope protein M, and peptide pr. This cleavage is incomplete as up to 30% of viral particles still carry uncleaved prM. N-glycosylated. In terms of processing, N-glycosylated. The excreted form is glycosylated and this is required for efficient secretion of the protein from infected cells. Post-translationally, acetylated by host KAT5. Acetylation modulates NS3 RNA-binding and unwinding activities and plays an important positive role for viral replication. Sumoylation of RNA-directed RNA polymerase NS5 increases NS5 protein stability allowing proper viral RNA replication. In terms of processing, phosphorylated on serines residues. This phosphorylation may trigger NS5 nuclear localization.

Its subcellular location is the virion. It is found in the host nucleus. The protein resides in the host cytoplasm. The protein localises to the host perinuclear region. It localises to the secreted. Its subcellular location is the virion membrane. It is found in the host endoplasmic reticulum membrane. The protein resides in the host mitochondrion. The enzyme catalyses Selective hydrolysis of -Xaa-Xaa-|-Yaa- bonds in which each of the Xaa can be either Arg or Lys and Yaa can be either Ser or Ala.. The catalysed reaction is RNA(n) + a ribonucleoside 5'-triphosphate = RNA(n+1) + diphosphate. It carries out the reaction a ribonucleoside 5'-triphosphate + H2O = a ribonucleoside 5'-diphosphate + phosphate + H(+). It catalyses the reaction ATP + H2O = ADP + phosphate + H(+). The enzyme catalyses a 5'-end (5'-triphosphoguanosine)-ribonucleoside in mRNA + S-adenosyl-L-methionine = a 5'-end (N(7)-methyl 5'-triphosphoguanosine)-ribonucleoside in mRNA + S-adenosyl-L-homocysteine. The catalysed reaction is a 5'-end (N(7)-methyl 5'-triphosphoguanosine)-ribonucleoside in mRNA + S-adenosyl-L-methionine = a 5'-end (N(7)-methyl 5'-triphosphoguanosine)-(2'-O-methyl-ribonucleoside) in mRNA + S-adenosyl-L-homocysteine + H(+). Functionally, plays a role in virus budding by binding to the cell membrane and gathering the viral RNA into a nucleocapsid that forms the core of a mature virus particle. During virus entry, may induce genome penetration into the host cytoplasm after hemifusion induced by the surface proteins. Can migrate to the cell nucleus where it modulates host functions. Overcomes the anti-viral effects of host EXOC1 by sequestering and degrading the latter through the proteasome degradation pathway. Its function is as follows. Inhibits RNA silencing by interfering with host Dicer. Prevents premature fusion activity of envelope proteins in trans-Golgi by binding to envelope protein E at pH6.0. After virion release in extracellular space, gets dissociated from E dimers. In terms of biological role, acts as a chaperone for envelope protein E during intracellular virion assembly by masking and inactivating envelope protein E fusion peptide. prM is the only viral peptide matured by host furin in the trans-Golgi network probably to avoid catastrophic activation of the viral fusion activity in acidic Golgi compartment prior to virion release. prM-E cleavage is inefficient, and many virions are only partially matured. These uncleaved prM would play a role in immune evasion. Functionally, may play a role in virus budding. Exerts cytotoxic effects by activating a mitochondrial apoptotic pathway through M ectodomain. May display a viroporin activity. Its function is as follows. Binds to host cell surface receptor and mediates fusion between viral and cellular membranes. Envelope protein is synthesized in the endoplasmic reticulum in the form of heterodimer with protein prM. They play a role in virion budding in the ER, and the newly formed immature particle is covered with 60 spikes composed of heterodimer between precursor prM and envelope protein E. The virion is transported to the Golgi apparatus where the low pH causes dissociation of PrM-E heterodimers and formation of E homodimers. prM-E cleavage is inefficient, and many virions are only partially matured. These uncleaved prM would play a role in immune evasion. Involved in immune evasion, pathogenesis and viral replication. Once cleaved off the polyprotein, is targeted to three destinations: the viral replication cycle, the plasma membrane and the extracellular compartment. Essential for viral replication. Required for formation of the replication complex and recruitment of other non-structural proteins to the ER-derived membrane structures. Excreted as a hexameric lipoparticle that plays a role against host immune response. Antagonizing the complement function. Binds to the host macrophages and dendritic cells. Inhibits signal transduction originating from Toll-like receptor 3 (TLR3). In terms of biological role, disrupts the host endothelial glycocalyx layer of host pulmonary microvascular endothelial cells, inducing degradation of sialic acid and shedding of heparan sulfate proteoglycans. NS1 induces expression of sialidases, heparanase, and activates cathepsin L, which activates heparanase via enzymatic cleavage. These effects are probably linked to the endothelial hyperpermeability observed in severe dengue disease. Functionally, component of the viral RNA replication complex that functions in virion assembly and antagonizes the host immune response. Its function is as follows. Required cofactor for the serine protease function of NS3. May have membrane-destabilizing activity and form viroporins. Displays three enzymatic activities: serine protease, NTPase and RNA c. NS3 serine protease, in association with NS2B, performs its autocleavage and cleaves the polyprotein at dibasic sites in the cytoplasm: C-prM, NS2A-NS2B, NS2B-NS3, NS3-NS4A, NS4A-2K and NS4B-NS5. NS3 RNA helicase binds RNA and unwinds dsRNA in the 3' to 5' direction. In terms of biological role, regulates the ATPase activity of the NS3 helicase activity. NS4A allows NS3 helicase to conserve energy during unwinding. Plays a role in the inhibition of the host innate immune response. Interacts with host MAVS and thereby prevents the interaction between RIGI and MAVS. In turn, IFN-beta production is impaired. Interacts with host AUP1 which mediates induction of lipophagy in host cells and facilitates production of virus progeny particles. Functionally, functions as a signal peptide for NS4B and is required for the interferon antagonism activity of the latter. Its function is as follows. Induces the formation of ER-derived membrane vesicles where the viral replication takes place. Inhibits interferon (IFN)-induced host STAT1 phosphorylation and nuclear translocation, thereby preventing the establishment of cellular antiviral state by blocking the IFN-alpha/beta pathway. Replicates the viral (+) and (-) RNA genome, and performs the capping of genomes in the cytoplasm. NS5 methylates viral RNA cap at guanine N-7 and ribose 2'-O positions. Besides its role in RNA genome replication, also prevents the establishment of cellular antiviral state by blocking the interferon-alpha/beta (IFN-alpha/beta) signaling pathway. Inhibits host TYK2 and STAT2 phosphorylation, thereby preventing activation of JAK-STAT signaling pathway. The protein is Genome polyprotein of Aedes aegypti (Yellowfever mosquito).